The primary structure comprises 88 residues: Small ribosomal subunit protein bS16 (88 aa).

This sequence belongs to the bacterial ribosomal protein bS16 family.

This Mesomycoplasma hyopneumoniae (strain 232) (Mycoplasma hyopneumoniae) protein is Small ribosomal subunit protein bS16.